The primary structure comprises 219 residues: Protein YNG1 (219 aa).

A PHD-type; degenerate zinc finger spans residues 155 to 204; that stretch reads EVYCFCRNVSYGPMVACDNPACPFEWFHYGCVGLKQAPKGKWYCSKDCKE. Residues Cys158, Cys160, Cys171, Cys176, His182, Cys185, Cys198, and Cys202 each coordinate Zn(2+).

This sequence belongs to the ING family. In terms of assembly, component of the NuA3 histone acetyltransferase (HAT) complex. The NuA3 HAT complex has 2 functionally distinct forms that participate in transcription. The NuA3a HAT complex is composed of at least NTO1, SAS3, TAF14, YNG1 and EAF6. The NuA3b HAT complex contains an additional subunit, PDP3. Interacts with H3K4me3 and to a lesser extent with H3K4me2.

The protein localises to the nucleus. Histone-binding component of the NuA3a histone acetyltransferase complex. Targets the NuA3a HAT complex via histone H3K4me3 to facilitate transcription initiation at promoter regions. SAS3 then acetylates H3K14, leading to transcription initiation at a subset of genes. YNG1 is required for the HAT activity of NuA3 but not for its integrity. Mediates the interaction of SAS3 with nucleosomes. This Saccharomyces cerevisiae (strain ATCC 204508 / S288c) (Baker's yeast) protein is Protein YNG1 (YNG1).